We begin with the raw amino-acid sequence, 116 residues long: Iron-sulfur cluster insertion protein ErpA (116 aa).

Iron-sulfur cluster contacts are provided by Cys44, Cys108, and Cys110.

Belongs to the HesB/IscA family. In terms of assembly, homodimer. Iron-sulfur cluster is required as a cofactor.

Functionally, required for insertion of 4Fe-4S clusters for at least IspG. This chain is Iron-sulfur cluster insertion protein ErpA, found in Pseudomonas aeruginosa (strain LESB58).